A 451-amino-acid polypeptide reads, in one-letter code: Pre-mRNA-splicing factor PRP46 (451 aa).

7 WD repeats span residues 137-168, 180-210, 222-252, 264-294, 306-335, 348-377, and 397-427; these read GHLG…KVWD, GHVM…KCWD, GHLS…KLWD, GHKG…RLWD, HHKR…RSWG, EKTG…SFYD, and EGER…KIWK.

Belongs to the WD repeat PRL1/PRL2 family. Belongs to the CWC complex (or CEF1-associated complex), a spliceosome subcomplex composed of the U2, U5 and U6 snRNAs and at least BUD13, BUD31, BRR2, CDC40, CEF1, CLF1, CUS1, CWC2, CWC15, CWC21, CWC22, CWC23, CWC24, CWC25, CWC27, ECM2, HSH155, IST3, ISY1, LEA1, MSL1, NTC20, PRP8, PRP9, PRP11, PRP19, PRP21, PRP22, PRP45, PRP46, SLU7, SMB1, SMD1, SMD2, SMD3, SMX2, SMX3, SNT309, SNU114, SPP2, SYF1, SYF2, RSE1 and YJU2. Interacts with CEF1, CLF1, NTC20, PRP45 and SYF1.

It is found in the cytoplasm. Its subcellular location is the nucleus. Its function is as follows. Involved in pre-mRNA splicing. May also be required for cell cycle progression at G2/M. This Saccharomyces cerevisiae (strain ATCC 204508 / S288c) (Baker's yeast) protein is Pre-mRNA-splicing factor PRP46 (PRP46).